The following is a 369-amino-acid chain: Peptidyl-prolyl cis-trans isomerase D (369 aa).

A PPIase cyclophilin-type domain is found at 8–173 (YFDLSIGGKP…ADVRIDACGI (166 aa)). TPR repeat units lie at residues 218-251 (VEAVKAIGTAQLQAARFDVAVQKYAKAAGFLQEY), 269-302 (VAVHLNLALAALKAGNHQRVLSAASEVLHGAADD), and 306-339 (AKALYRRGLAYHHLKDPEMALTDLELAATYQPGD).

Belongs to the cyclophilin-type PPIase family. PPIase D subfamily.

The protein localises to the cytoplasm. The enzyme catalyses [protein]-peptidylproline (omega=180) = [protein]-peptidylproline (omega=0). Its function is as follows. PPIases accelerate the folding of proteins. It catalyzes the cis-trans isomerization of proline imidic peptide bonds in oligopeptides. The chain is Peptidyl-prolyl cis-trans isomerase D (CPR6) from Eremothecium gossypii (strain ATCC 10895 / CBS 109.51 / FGSC 9923 / NRRL Y-1056) (Yeast).